Reading from the N-terminus, the 116-residue chain is Large ribosomal subunit protein bL19 (116 aa).

It belongs to the bacterial ribosomal protein bL19 family.

Its function is as follows. This protein is located at the 30S-50S ribosomal subunit interface and may play a role in the structure and function of the aminoacyl-tRNA binding site. This Azotobacter vinelandii (strain DJ / ATCC BAA-1303) protein is Large ribosomal subunit protein bL19.